The chain runs to 471 residues: Putative multidrug resistance protein MdtD (471 aa).

Residues Met1 to Gln11 are Periplasmic-facing. Residues Leu12–Ala32 form a helical membrane-spanning segment. Residues Leu33–His48 are Cytoplasmic-facing. The helical transmembrane segment at Met49 to Ala69 threads the bilayer. Residues Asp70–Asn76 are Periplasmic-facing. Residues Ile77–Thr97 traverse the membrane as a helical segment. At Leu98–Leu101 the chain is on the cytoplasmic side. Residues Leu102 to Met124 traverse the membrane as a helical segment. Residues Lys125 to Thr137 are Periplasmic-facing. Residues Phe138–Val158 traverse the membrane as a helical segment. The Cytoplasmic portion of the chain corresponds to Glu159–His164. A helical transmembrane segment spans residues Trp165–Met185. The Periplasmic portion of the chain corresponds to Pro186–Asp196. A helical membrane pass occupies residues Leu197 to Ser217. At Lys218–Pro224 the chain is on the cytoplasmic side. Residues Leu225–Ala245 form a helical membrane-spanning segment. Topologically, residues Arg246–Thr262 are periplasmic. A helical membrane pass occupies residues Phe263–Met283. At Thr284–Pro285 the chain is on the cytoplasmic side. A helical membrane pass occupies residues Val286 to Met306. Residues Val307 to Thr341 are Periplasmic-facing. The helical transmembrane segment at Leu342–Leu362 threads the bilayer. Residues Gln363–Ser395 are Cytoplasmic-facing. The chain crosses the membrane as a helical span at residues Met396–Phe416. Residues Gly417–Thr430 lie on the Periplasmic side of the membrane. A helical transmembrane segment spans residues Val431–Ala451. At Arg452 to Gln471 the chain is on the cytoplasmic side.

It belongs to the major facilitator superfamily. TCR/Tet family.

It is found in the cell inner membrane. This chain is Putative multidrug resistance protein MdtD, found in Escherichia fergusonii (strain ATCC 35469 / DSM 13698 / CCUG 18766 / IAM 14443 / JCM 21226 / LMG 7866 / NBRC 102419 / NCTC 12128 / CDC 0568-73).